The primary structure comprises 156 residues: Small ribosomal subunit protein uS7 (156 aa).

The protein belongs to the universal ribosomal protein uS7 family. As to quaternary structure, part of the 30S ribosomal subunit. Contacts proteins S9 and S11.

One of the primary rRNA binding proteins, it binds directly to 16S rRNA where it nucleates assembly of the head domain of the 30S subunit. Is located at the subunit interface close to the decoding center, probably blocks exit of the E-site tRNA. The sequence is that of Small ribosomal subunit protein uS7 from Oleidesulfovibrio alaskensis (strain ATCC BAA-1058 / DSM 17464 / G20) (Desulfovibrio alaskensis).